Reading from the N-terminus, the 37-residue chain is Large ribosomal subunit protein bL36 (37 aa).

It belongs to the bacterial ribosomal protein bL36 family.

In Geobacter sp. (strain M21), this protein is Large ribosomal subunit protein bL36.